Consider the following 295-residue polypeptide: Diaminopimelate epimerase (295 aa).

Asparagine 13, glutamine 46, and asparagine 66 together coordinate substrate. The Proton donor role is filled by cysteine 75. Substrate-binding positions include glycine 76–asparagine 77, asparagine 162, asparagine 195, and glutamate 213–arginine 214. Cysteine 222 acts as the Proton acceptor in catalysis. A substrate-binding site is contributed by glycine 223–threonine 224.

It belongs to the diaminopimelate epimerase family. Homodimer.

It is found in the cytoplasm. The catalysed reaction is (2S,6S)-2,6-diaminopimelate = meso-2,6-diaminopimelate. It functions in the pathway amino-acid biosynthesis; L-lysine biosynthesis via DAP pathway; DL-2,6-diaminopimelate from LL-2,6-diaminopimelate: step 1/1. Catalyzes the stereoinversion of LL-2,6-diaminopimelate (L,L-DAP) to meso-diaminopimelate (meso-DAP), a precursor of L-lysine and an essential component of the bacterial peptidoglycan. This chain is Diaminopimelate epimerase, found in Psychrobacter cryohalolentis (strain ATCC BAA-1226 / DSM 17306 / VKM B-2378 / K5).